Here is a 48-residue protein sequence, read N- to C-terminus: uncharacterized protein (48 aa).

A helical transmembrane segment spans residues 21–43 (SIFVSLGVFAVSVAILKSRLGNF).

The protein resides in the membrane. This is an uncharacterized protein from Schizosaccharomyces pombe (strain 972 / ATCC 24843) (Fission yeast).